Consider the following 62-residue polypeptide: MATKIKFKYKGQDLEVDISKVKKVWKVGKMVSFTYDDNGKTGRGAVSEKDAPKELLSMIGKK.

The protein belongs to the 7 kDa DNA-binding/endoribonuclease P2 family. In terms of assembly, monomer.

Its subcellular location is the cytoplasm. Can constrain negative DNA supercoils. May be involved in maintaining the integrity of the genome at high temperature. The polypeptide is DNA-binding protein 7 (Metallosphaera cuprina (strain Ar-4)).